Consider the following 344-residue polypeptide: Holliday junction branch migration complex subunit RuvB (344 aa).

Residues 1–182 form a large ATPase domain (RuvB-L) region; it reads MRIELLNTPP…FGINSRFDYY (182 aa). ATP contacts are provided by residues Ile21, Arg22, Gly63, Lys66, Thr67, Thr68, 129–131, Arg172, Tyr182, and Arg219; that span reads EDF. Thr67 serves as a coordination point for Mg(2+). Residues 183 to 253 are small ATPAse domain (RuvB-S); the sequence is APELLEGIIR…IAMKTLDCLE (71 aa). A head domain (RuvB-H) region spans residues 256–344; sequence EEGLDDMDKK…ISLFDAQPTS (89 aa). DNA-binding residues include Arg311 and Arg316.

This sequence belongs to the RuvB family. Homohexamer. Forms an RuvA(8)-RuvB(12)-Holliday junction (HJ) complex. HJ DNA is sandwiched between 2 RuvA tetramers; dsDNA enters through RuvA and exits via RuvB. An RuvB hexamer assembles on each DNA strand where it exits the tetramer. Each RuvB hexamer is contacted by two RuvA subunits (via domain III) on 2 adjacent RuvB subunits; this complex drives branch migration. In the full resolvosome a probable DNA-RuvA(4)-RuvB(12)-RuvC(2) complex forms which resolves the HJ.

It is found in the cytoplasm. The enzyme catalyses ATP + H2O = ADP + phosphate + H(+). Its function is as follows. The RuvA-RuvB-RuvC complex processes Holliday junction (HJ) DNA during genetic recombination and DNA repair, while the RuvA-RuvB complex plays an important role in the rescue of blocked DNA replication forks via replication fork reversal (RFR). RuvA specifically binds to HJ cruciform DNA, conferring on it an open structure. The RuvB hexamer acts as an ATP-dependent pump, pulling dsDNA into and through the RuvAB complex. RuvB forms 2 homohexamers on either side of HJ DNA bound by 1 or 2 RuvA tetramers; 4 subunits per hexamer contact DNA at a time. Coordinated motions by a converter formed by DNA-disengaged RuvB subunits stimulates ATP hydrolysis and nucleotide exchange. Immobilization of the converter enables RuvB to convert the ATP-contained energy into a lever motion, pulling 2 nucleotides of DNA out of the RuvA tetramer per ATP hydrolyzed, thus driving DNA branch migration. The RuvB motors rotate together with the DNA substrate, which together with the progressing nucleotide cycle form the mechanistic basis for DNA recombination by continuous HJ branch migration. Branch migration allows RuvC to scan DNA until it finds its consensus sequence, where it cleaves and resolves cruciform DNA. The chain is Holliday junction branch migration complex subunit RuvB from Pelodictyon phaeoclathratiforme (strain DSM 5477 / BU-1).